The chain runs to 724 residues: Ribosomal RNA processing protein 1 homolog B (724 aa).

Residues 331 to 576 (NGAPLSSAED…SKKKKKTMKL (246 aa)) are disordered. Ser-336 and Ser-370 each carry phosphoserine. Residues 373-386 (HIHKKKRKKRKRSH) show a composition bias toward basic residues. Residues Ser-432 and Ser-438 each carry the phosphoserine modification. The segment covering 448–461 (HNKRKRPRKKKLRA) has biased composition (basic residues). A compositionally biased stretch (low complexity) spans 483–496 (SGHSQSSAAHISSS). Position 494 is a phosphoserine (Ser-494). Polar residues-rich tracts occupy residues 513–528 (DSSS…TPTS) and 548–564 (KTAS…SQKP). Lys-618 carries the post-translational modification N6-acetyllysine. The interval 625–649 (AKNSSATRPQGPAGQLNKTPSSSKK) is disordered. Over residues 640-649 (LNKTPSSSKK) the composition is skewed to polar residues. Phosphoserine occurs at positions 668 and 672. A Citrulline modification is found at Arg-678. The disordered stretch occupies residues 687 to 724 (PLHGVLKTATSSPASTPLSPMRLPATTPKRRPRAADFF). Thr-694 is subject to Phosphothreonine. Residues 694–706 (TATSSPASTPLSP) show a composition bias toward low complexity. Residues Ser-698 and Ser-701 each carry the phosphoserine modification.

The protein belongs to the RRP1 family. Interacts with the transcriptional activator E2F1. Interacts with serine/threonine-protein phosphatase PP1 subunits PPP1CB and PPP1CC but not with PPP1CA. Interacts with 60S ribosomal proteins RPL5 and RPL27, ribosomal processing protein RRP1/NNP1 and other nucleolar proteins including NOP2/NOL1 and FBL. Also interacts with nucleolar protein NPM1/B23. Interacts with splicing factor SRSF1 and LUC7L3/CROP. Interacts with GTPase activator SIPA1. Interacts with H1-10, NCL, PARP1, TRIM28 and YBX3. Citrullinated by PADI4.

It is found in the nucleus. The protein resides in the nucleolus. The protein localises to the nucleoplasm. Its subcellular location is the chromosome. Positively regulates DNA damage-induced apoptosis by acting as a transcriptional coactivator of proapoptotic target genes of the transcriptional activator E2F1. Likely to play a role in ribosome biogenesis by targeting serine/threonine protein phosphatase PP1 to the nucleolus. Involved in regulation of mRNA splicing. Inhibits SIPA1 GTPase activity. Involved in regulating expression of extracellular matrix genes. Associates with chromatin and may play a role in modulating chromatin structure. This is Ribosomal RNA processing protein 1 homolog B (Rrp1b) from Mus musculus (Mouse).